We begin with the raw amino-acid sequence, 101 residues long: Transcription and mRNA export factor SUS1 (101 aa).

This sequence belongs to the ENY2 family. Component of the nuclear pore complex (NPC)-associated TREX-2 complex (transcription and export complex 2), composed of at least SUS1, SAC3, THP1, SEM1, and CDC31. TREX-2 contains 2 SUS1 chains. The TREX-2 complex interacts with the nucleoporin NUP1. Component of the 1.8 MDa SAGA transcription coactivator-HAT complex. SAGA is built of 5 distinct domains with specialized functions. Within the SAGA complex, SUS1, SGF11, SGF73 and UBP8 form an additional subcomplex of SAGA called the DUB module (deubiquitination module). Interacts directly with THP1, SAC3, SGF11, and with the RNA polymerase II.

It is found in the nucleus. It localises to the nucleoplasm. The protein resides in the cytoplasm. Its subcellular location is the P-body. Involved in mRNA export coupled transcription activation by association with both the TREX-2 and the SAGA complexes. At the promoters, SAGA is required for recruitment of the basal transcription machinery. It influences RNA polymerase II transcriptional activity through different activities such as TBP interaction and promoter selectivity, interaction with transcription activators, and chromatin modification through histone acetylation and deubiquitination. Within the SAGA complex, participates in a subcomplex required for deubiquitination of H2B and for the maintenance of steady-state H3 methylation levels. The TREX-2 complex functions in docking export-competent ribonucleoprotein particles (mRNPs) to the nuclear entrance of the nuclear pore complex (nuclear basket). TREX-2 participates in mRNA export and accurate chromatin positioning in the nucleus by tethering genes to the nuclear periphery. May also be involved in cytoplasmic mRNA decay by interaction with components of P-bodies. The sequence is that of Transcription and mRNA export factor SUS1 from Debaryomyces hansenii (strain ATCC 36239 / CBS 767 / BCRC 21394 / JCM 1990 / NBRC 0083 / IGC 2968) (Yeast).